The following is a 1180-amino-acid chain: Pyruvate carboxylase 2 (1180 aa).

The residue at position 2 (serine 2) is an N-acetylserine. One can recognise a Biotin carboxylation domain in the interval 19–471 (EKNKILVANR…WTTFIDDTPQ (453 aa)). Residues lysine 137, glutamate 221, and histidine 256 each contribute to the ATP site. In terms of domain architecture, ATP-grasp spans 141–338 (RHLAARANVP…IVSAQIQIAA (198 aa)). Arginine 313 is an active-site residue. The Pyruvate carboxyltransferase domain occupies 558–825 (TLLMDTTWRD…DTGINVEHVR (268 aa)). Substrate is bound by residues 566 to 570 (RDAHQ) and arginine 639. Aspartate 567 contributes to the a divalent metal cation binding site. A divalent metal cation contacts are provided by lysine 735, histidine 765, and histidine 767. The residue at position 735 (lysine 735) is an N6-carboxylysine. Threonine 899 contributes to the substrate binding site. Positions 1095-1170 (KADVHDTHQI…DASDLLVVLE (76 aa)) constitute a Biotinyl-binding domain. Lysine 1136 carries the N6-biotinyllysine modification.

Homotetramer. It depends on biotin as a cofactor. Requires Zn(2+) as cofactor.

The protein resides in the cytoplasm. The catalysed reaction is hydrogencarbonate + pyruvate + ATP = oxaloacetate + ADP + phosphate + H(+). It participates in carbohydrate biosynthesis; gluconeogenesis. Functionally, pyruvate carboxylase catalyzes a 2-step reaction, involving the ATP-dependent carboxylation of the covalently attached biotin in the first step and the transfer of the carboxyl group to pyruvate in the second. In Saccharomyces cerevisiae (strain ATCC 204508 / S288c) (Baker's yeast), this protein is Pyruvate carboxylase 2 (PYC2).